A 477-amino-acid chain; its full sequence is PTS system glucose-specific EIICB component (477 aa).

Residues 1-14 (MFKNAFANLQKVGK) are Cytoplasmic-facing. The PTS EIIC type-1 domain maps to 1 to 388 (MFKNAFANLQ…LDLKTPGRED (388 aa)). The chain crosses the membrane as a helical span at residues 15–35 (SLMLPVSVLPIAGILLGVGSA). At 36–50 (NFSWLPAVVSHVMAE) the chain is on the periplasmic side. A helical membrane pass occupies residues 51–71 (AGGSVFANMPLIFAIGVALGF). Residues 72–79 (TNNDGVSA) lie on the Cytoplasmic side of the membrane. The helical transmembrane segment at 80–100 (LAAVVAYGIMVKTMAVVAPLV) threads the bilayer. Topologically, residues 101–111 (LHLPAEEIAAK) are periplasmic. A helical membrane pass occupies residues 112 to 132 (HLADTGVLGGIISGAIAAYMF). At 133–151 (NRFYRIKLPEYLGFFAGKR) the chain is on the cytoplasmic side. Residues 152 to 172 (FVPIISGLAAIFTGVVLSFVW) traverse the membrane as a helical segment. Residues 173–190 (PPIGTAIQAFSQWAAYQN) are Periplasmic-facing. The helical transmembrane segment at 191–211 (PVVAFGIYGFIERCLVPFGLH) threads the bilayer. Topologically, residues 212–248 (HIWNVPFQMQIGEYTNAAGQVFHGDIPRYMAGDPTAG) are cytoplasmic. The chain crosses the membrane as a helical span at residues 249–269 (MLSGGFLFKMYGLPAAAIAIW). The Periplasmic portion of the chain corresponds to 270–279 (HSAKPENRAK). The chain crosses the membrane as a helical span at residues 280-300 (VGGIMISAALTSFLTGITEPI). Over 301-309 (EFSFMFVAP) the chain is Cytoplasmic. The chain crosses the membrane as a helical span at residues 310 to 330 (ILYIIHAILAGLAFPICILLG). Topologically, residues 331–355 (MRDGTSFSHGLIDFIVLSGNSSKLW) are periplasmic. Residues 356-376 (LFPIVGAGYAIVYYTVFRVLI) form a helical membrane-spanning segment. The Cytoplasmic portion of the chain corresponds to 377-477 (KALDLKTPGR…TEMDEYIRNS (101 aa)). The PTS EIIB type-1 domain occupies 399–477 (SEMAPALVAA…TEMDEYIRNS (79 aa)). The active-site Phosphocysteine intermediate; for EIIB activity is the Cys-421. Residue Cys-421 is modified to Phosphocysteine.

It localises to the cell inner membrane. The enzyme catalyses N(pros)-phospho-L-histidyl-[protein] + D-glucose(out) = D-glucose 6-phosphate(in) + L-histidyl-[protein]. In terms of biological role, the phosphoenolpyruvate-dependent sugar phosphotransferase system (sugar PTS), a major carbohydrate active transport system, catalyzes the phosphorylation of incoming sugar substrates concomitantly with their translocation across the cell membrane. The enzyme II complex composed of PtsG and Crr is involved in glucose transport. Also functions as a chemoreceptor monitoring the environment for changes in sugar concentration. It can also phosphorylate mannose, methyl alpha-glucoside and 2-deoxy-glucose. This is PTS system glucose-specific EIICB component (ptsG) from Salmonella typhimurium (strain LT2 / SGSC1412 / ATCC 700720).